The sequence spans 366 residues: Growth hormone secretagogue receptor type 1 (366 aa).

At 1–40 (MWNATPSEEPGFNLTLADLDWDASPGNDSLGDELLQLFPA) the chain is on the extracellular side. N-linked (GlcNAc...) asparagine glycans are attached at residues N13 and N27. Residues 41-66 (PLLAGVTATCVALFVVGIAGNLLTML) traverse the membrane as a helical segment. Topologically, residues 67 to 72 (VVSRFR) are cytoplasmic. Residues 73–96 (ELRTTTNLYLSSMAFSDLLIFLCM) form a helical membrane-spanning segment. Residues 97–117 (PLDLVRLWQYRPWNFGDLLCK) are Extracellular-facing. An intrachain disulfide couples C116 to C198. A helical membrane pass occupies residues 118 to 139 (LFQFVSESCTYATVLTITALSV). Residues 140-162 (ERYFAICFPLRAKVVVTKGRVKL) lie on the Cytoplasmic side of the membrane. A helical transmembrane segment spans residues 163–183 (VIFVIWAVAFCSAGPIFVLVG). The Extracellular portion of the chain corresponds to 184–211 (VEHENGTDPWDTNECRPTEFAVRSGLLT). The chain crosses the membrane as a helical span at residues 212-235 (VMVWVSSIFFFLPVFCLTVLYSLI). Topologically, residues 236-263 (GRKLWRRRRGDAVVGASLRDQNHKQTVK) are cytoplasmic. The helical transmembrane segment at 264–285 (MLAVVVFAFILCWLPFHVGRYL) threads the bilayer. The Extracellular segment spans residues 286 to 302 (FSKSFEPGSLEIAQISQ). A helical transmembrane segment spans residues 303 to 326 (YCNLVSFVLFYLSAAINPILYNIM). Residues 327 to 366 (SKKYRVAVFRLLGFEPFSQRKLSTLKDESSRAWTESSINT) are Cytoplasmic-facing.

Belongs to the G-protein coupled receptor 1 family. As to expression, pituitary and hypothalamus.

It localises to the cell membrane. Functionally, receptor for ghrelin, coupled to G-alpha-11 proteins. Stimulates growth hormone secretion. Also binds other growth hormone releasing peptides (GHRP) (e.g. Met-enkephalin and GHRP-6) as well as non-peptide, low molecular weight secretagogues (e.g. L-692,429, MK-0677, adenosine). The chain is Growth hormone secretagogue receptor type 1 (GHSR) from Homo sapiens (Human).